The primary structure comprises 304 residues: Homoserine kinase (304 aa).

Pro90–Ser100 provides a ligand contact to ATP.

The protein belongs to the GHMP kinase family. Homoserine kinase subfamily.

It localises to the cytoplasm. The enzyme catalyses L-homoserine + ATP = O-phospho-L-homoserine + ADP + H(+). It functions in the pathway amino-acid biosynthesis; L-threonine biosynthesis; L-threonine from L-aspartate: step 4/5. In terms of biological role, catalyzes the ATP-dependent phosphorylation of L-homoserine to L-homoserine phosphate. This chain is Homoserine kinase, found in Staphylococcus aureus (strain MSSA476).